The primary structure comprises 1255 residues: Pre-mRNA-splicing factor ATP-dependent RNA helicase DEAH7 (1255 aa).

Residues 1 to 316 form a disordered region; sequence MGVDPFKTTE…SDEDRSQGAE (316 aa). Over residues 13–60 the composition is skewed to basic and acidic residues; the sequence is EADKETNGGVPVKDKLTFKAPERKSRLGLDARAIEKKDNAKTEGEFKV. Residues 109 to 137 are compositionally biased toward polar residues; sequence AQESTVTTENAGTSDISITPRTLSCTSSY. 2 consecutive short sequence motifs (nuclear localization signal) follow at residues 144 to 153 and 172 to 191; these read RHREEHRRDR and RRRE…KRRR. Basic and acidic residues predominate over residues 144–219; sequence RHREEHRRDR…EWERSPHGDR (76 aa). 2 stretches are compositionally biased toward low complexity: residues 220–240 and 271–290; these read GSSY…AASP and PIRA…GGRS. The segment covering 297–316 has biased composition (basic and acidic residues); it reads REGDLTNEGHSDEDRSQGAE. Residues 568-731 enclose the Helicase ATP-binding domain; it reads LQVIRENQVI…FGSVPIFNIP (164 aa). Position 581–588 (581–588) interacts with ATP; the sequence is GETGSGKT. The DEAH box motif lies at 678–681; sequence DEAH. The 181-residue stretch at 753–933 folds into the Helicase C-terminal domain; the sequence is AVKQAMTIHI…NVVLLLKSLK (181 aa). Residues 1190–1224 show a composition bias toward basic and acidic residues; it reads LEHKKKQKEEKSGMEEEMEKLRRDQVESELRSKER. Residues 1190–1255 are disordered; sequence LEHKKKQKEE…TFLRPKKLGL (66 aa).

This sequence belongs to the DEAD box helicase family. DEAH subfamily. PRP16 sub-subfamily. As to quaternary structure, interacts with the Phytophthora PSR1 protein.

The protein localises to the nucleus. The catalysed reaction is ATP + H2O = ADP + phosphate + H(+). Its function is as follows. Involved in pre-mRNA splicing by mediating structural transitions of the spliceosome during the catalytic step. Facilitates expression of genes involved in auxin-mediated development including male-gametophyte transmission, apical-basal patterning of embryonic and gynoecium development, stamen development, phyllotactic flower positioning, and vascular development. Also involved in root-meristem maintenance and planar polarity of root-hair positioning. Acts as a component of RNA silencing that regulates distinct classes of endogenous small RNAs. Functions as a positive regulator of plant immunity. This is Pre-mRNA-splicing factor ATP-dependent RNA helicase DEAH7 from Arabidopsis thaliana (Mouse-ear cress).